The primary structure comprises 1217 residues: MAILKRTNRAKAATAAAPNSTGKSNGIKKAVYTSTRKKTVGVDDLTLLSKITDEEINKNLELRFRNGEIYTYIGHVLISVNPFRDLGIYTMDILKSYQGKNRLETSPHVYAIAENAYYQMKSYHENQCIIISGESGAGKTEAAKRIMQYITHVSKSVGTEIERVSEIILATNPLLESFGCAKTLRNNNSSRHGKYLEMIFNSGGVPVGAKITNYLLEKNRIVNQVRNERNFHIFYQFTKSAPQKYRDTYGIQGPENYVYTSACQCLSVDGISDEKDFQGTMNAMKVIGITEPEQDEIFRMLSIILWLGNIQFQEGQDGGSVISDKSITEFLGYLIGVPVAAIERALTIRIMQTQHGARRGSVYEVPLNPTQALAVRDALSMAIYNCLFDWIVERVNKALVTSDNSVSNSIGILDIYGFEIFENNSFEQLCINYVNEKLQQIFIELTLKTEQEEYVREQIAWTPIKYFNNKVVCDLIESKRPPGLFAAMNDAIATAHADSAAADSAFAQRLNFLSSNPHFEQRQNQFIVKHYAGDVTYSITGMTDKNKDQLATDILNLIHSSNNEFMKSIFPVAEESNSRRRPPTAGDRIKTSANDLVETLMKCQPSYIRTIKPNQTKSPNDYDQQMVLHQIKYLGLQENIRIRRAGFAYRQAFDTFAQRFAVLSGKTSYAGEYTWQGDDKSACEQILKDTNIPSSEYQMGTSKVFIKNPETLFALEDMRDKFWDTMATRIQRAWRSYVRRRSEAAACIQKLWNRNKVNMELERVRNEGTKLLQGKKQRRRYSILGSRKFYGDYLSASKPNGTLWNTCGLSQNDHVIFSMRCEVLVHKLGRTSKPSPRQLVLTKKNLYLVITKIVDQKLTQQVEKKFAVSSIDSVGLTNLQDDWVAIRNKSSQNGDMFLRCFFKTEFITTLKRINRNIQVIVGPTIQYCRKPGKVQTVKTAKDETTKDYDYYKSGTIHVGTGLPPTSKSKPFPRLATGGSTAAARGPRPVVQNKPAATKPVSMPAAKSKPAPMANPVSTAQQTQNRPPAPAMQARPNTTQAAAPVTSTTTTIKQATTVSASKPAPSTVTSAASSPSNISKPSAPVANNVSKPSAVPPPPPPPPAEVEKKDLYLALYDFAGRSPNEMTIKKDEIIEIVQKEPSGWWLALKNGAEGWVPATYVTEYKGSTPQTTASSTNVAAQANNNASPAEVNNLAGSLADALRMRASAVRGSDEEEDW.

The disordered stretch occupies residues 1–26 (MAILKRTNRAKAATAAAPNSTGKSNG). The span at 10-19 (AKAATAAAPN) shows a compositional bias: low complexity. Residues 17–24 (APNSTGKS) and 133–140 (GESGAGKT) each bind ATP. A Myosin motor domain is found at 40 to 720 (VGVDDLTLLS…TLFALEDMRD (681 aa)). Residue S361 is modified to Phosphoserine. At Y363 the chain carries Phosphotyrosine. The segment at 409-491 (SIGILDIYGF…PGLFAAMNDA (83 aa)) is actin-binding. IQ domains lie at 724-744 (DTMATRIQRAWRSYVRRRSEA) and 745-770 (AACIQKLWNRNKVNMELERVRNEGTK). S742 bears the Phosphoserine mark. The TH1 domain occupies 778–964 (RRRYSILGSR…TIHVGTGLPP (187 aa)). The residue at position 782 (S782) is a Phosphoserine. The tract at residues 961-1105 (GLPPTSKSKP…PPPPPPPAEV (145 aa)) is disordered. Low complexity predominate over residues 998–1013 (KPVSMPAAKSKPAPMA). The segment covering 1015–1025 (PVSTAQQTQNR) has biased composition (polar residues). Residues 1045–1075 (TSTTTTIKQATTVSASKPAPSTVTSAASSPS) show a composition bias toward low complexity. A compositionally biased stretch (polar residues) spans 1076-1088 (NISKPSAPVANNV). Residues 1093–1103 (AVPPPPPPPPA) show a composition bias toward pro residues. The SH3 domain maps to 1106 to 1165 (EKKDLYLALYDFAGRSPNEMTIKKDEIIEIVQKEPSGWWLALKNGAEGWVPATYVTEYKG). Position 1211 is a phosphoserine (S1211).

Belongs to the TRAFAC class myosin-kinesin ATPase superfamily. Myosin family. As to quaternary structure, interacts with cam2. Interacts (via SH3 domain) with vrp1. In terms of processing, phosphorylation of the TEDS site (Ser-361) is required for the polarization of the actin cytoskeleton. Phosphorylation probably activates the myosin-I ATPase activity.

Its subcellular location is the cytoplasm. The protein localises to the cytoskeleton. The protein resides in the actin patch. Its function is as follows. Type-I myosin implicated in the organization of the actin cytoskeleton. Required for proper actin cytoskeleton polarization. At the cell cortex, assembles in patch-like structures together with proteins from the actin-polymerizing machinery and promotes actin assembly. Functions as actin nucleation-promoting factor (NPF) for the Arp2/3 complex. Contributes to proper septation by transporting vesicles containing septal material to the division site and is involved in the formation of sterol-rich membrane domains at the cell division site. Required also for mating. The polypeptide is Myosin-1 (myo1) (Schizosaccharomyces pombe (strain 972 / ATCC 24843) (Fission yeast)).